The following is a 213-amino-acid chain: Homeobox protein koza (213 aa).

Positions 24–72 (ILSHMGPGSKEKSLGFPKTDQDQDSSLRDTEEKYASEKLQSSSQPAEIH) are disordered. Residues 32–59 (SKEKSLGFPKTDQDQDSSLRDTEEKYAS) are compositionally biased toward basic and acidic residues. The segment at residues 102 to 161 (QKRSRAAFSHSQVIELERKFSSQKYLSAPERAQLAKSLKLTETQVKIWFQNRRYKTKRKQ) is a DNA-binding region (homeobox).

Belongs to the NK-3 homeobox family. In terms of tissue distribution, expressed in the muscle layer of embryonic somites. In tailbud embryos, expressed throughout the entire myotome but at the mid-tailbud stage (stage 32), expression becomes restricted to the outer periphery of the somite so that by the tadpole stage only the outer, type I cells show expression. Also expressed in the dorsal cement gland and in the myocardial layer of the developing heart. In all tissues, expression begins after terminal differentiation.

It is found in the nucleus. In terms of biological role, may regulate cell proliferation in a tissue-specific manner. The sequence is that of Homeobox protein koza from Xenopus laevis (African clawed frog).